A 291-amino-acid chain; its full sequence is Small ribosomal subunit protein uS2 (291 aa).

Residues 256 to 291 are disordered; the sequence is LRGEGTAPAASEEQPAEEPAPAAAEAQTDAAVGTAV. Over residues 261–291 the composition is skewed to low complexity; the sequence is TAPAASEEQPAEEPAPAAAEAQTDAAVGTAV.

Belongs to the universal ribosomal protein uS2 family.

In Frankia alni (strain DSM 45986 / CECT 9034 / ACN14a), this protein is Small ribosomal subunit protein uS2.